The chain runs to 420 residues: Reticulon-4 receptor-like 2 (420 aa).

The signal sequence occupies residues M1–C46. 2 disulfides stabilise this stretch: C31–C37 and C35–C46. Residues Q47 to P60 form the LRRNT domain. N50 is a glycosylation site (N-linked (GlcNAc...) asparagine). LRR repeat units lie at residues S61–S82, N83–H104, A107–G129, R132–G153, S156–D177, N180–G201, S204–G225, and R228–D249. The N-linked (GlcNAc...) asparagine glycan is linked to N93. N236 is a glycosylation site (N-linked (GlcNAc...) asparagine). Residues N261–P312 form the LRRCT domain. Disulfide bonds link C265–C288 and C267–C310. The segment at Q308–P399 is disordered. Residues P315–S327 form an important for interaction with MAG region. The span at L351–Q360 shows a compositional bias: basic and acidic residues. C390 carries the GPI-anchor amidated cysteine lipid modification. The propeptide at Q391–L420 is removed in mature form.

This sequence belongs to the Nogo receptor family. In terms of assembly, interaction with MAG is controversial, and may be indirect. Does not interact with MAG, OMG and RTN4. Interacts with MAG. In terms of processing, undergoes zinc metalloproteinase-mediated ectodomain shedding in neuroblastoma cells; is released both as a full-length ectodomain and an N-terminal fragment containing the leucine-rich repeat (LRR) region of the protein. N-glycosylated. In terms of tissue distribution, highly expressed in brain and liver. Expressed at lower levels in kidney, mammary gland, placenta, skeletal muscle, spleen and thyroid.

The protein resides in the cell membrane. Its subcellular location is the membrane raft. It is found in the cell projection. The protein localises to the dendrite. It localises to the perikaryon. The protein resides in the axon. Cell surface receptor that plays a functionally redundant role in the inhibition of neurite outgrowth mediated by MAG. Plays a functionally redundant role in postnatal brain development. Contributes to normal axon migration across the brain midline and normal formation of the corpus callosum. Does not seem to play a significant role in regulating axon regeneration in the adult central nervous system. Protects motoneurons against apoptosis; protection against apoptosis is probably mediated by MAG. Like other family members, plays a role in restricting the number dendritic spines and the number of synapses that are formed during brain development. Signaling mediates activation of Rho and downstream reorganization of the actin cytoskeleton. The polypeptide is Reticulon-4 receptor-like 2 (Homo sapiens (Human)).